Reading from the N-terminus, the 360-residue chain is MLVWLAEHLVKYYSGFNVFSYLTFRAIVSLLTALFISLWMGPRMIARLQKLAFGQVVRNDGPESHFSKRGTPTMGGIMILTAITVSVLLWAYPSNPYVWCVLTVLIGYGIIGFVDDYRKVVRKDTKGLIARWKYFWMSVIALGVAFALYLAGKDTPATELVVPFFKDVMPQLGLFYILLAYFVIVGTGNAVNLTDGLDGLAIMPTVFVAAGFALVAWATGNMNFANYLHIPYLRHAGELVIVCTAIVGAGLGFLWFNTYPAQVFMGDVGSLALGGALGIIAVLLRQEFLLVIMGGVFVVETLSVILQVGSFKLRGQRIFRMAPIHHHYELKGWPEPRVIVRFWIISLMLVLIGLATLKVR.

Transmembrane regions (helical) follow at residues 26–46 (AIVS…RMIA), 72–92 (PTMG…LWAY), 94–114 (SNPY…IGFV), 132–152 (WKYF…YLAG), 168–188 (VMPQ…VGTG), 199–219 (GLAI…AWAT), 236–256 (AGEL…FLWF), 263–283 (VFMG…IAVL), 288–308 (FLLV…ILQV), and 338–358 (VIVR…ATLK).

Belongs to the glycosyltransferase 4 family. MraY subfamily. It depends on Mg(2+) as a cofactor.

The protein resides in the cell inner membrane. It catalyses the reaction UDP-N-acetyl-alpha-D-muramoyl-L-alanyl-gamma-D-glutamyl-meso-2,6-diaminopimeloyl-D-alanyl-D-alanine + di-trans,octa-cis-undecaprenyl phosphate = di-trans,octa-cis-undecaprenyl diphospho-N-acetyl-alpha-D-muramoyl-L-alanyl-D-glutamyl-meso-2,6-diaminopimeloyl-D-alanyl-D-alanine + UMP. The protein operates within cell wall biogenesis; peptidoglycan biosynthesis. Functionally, catalyzes the initial step of the lipid cycle reactions in the biosynthesis of the cell wall peptidoglycan: transfers peptidoglycan precursor phospho-MurNAc-pentapeptide from UDP-MurNAc-pentapeptide onto the lipid carrier undecaprenyl phosphate, yielding undecaprenyl-pyrophosphoryl-MurNAc-pentapeptide, known as lipid I. The polypeptide is Phospho-N-acetylmuramoyl-pentapeptide-transferase (Klebsiella pneumoniae subsp. pneumoniae (strain ATCC 700721 / MGH 78578)).